The sequence spans 200 residues: COMM domain-containing protein 7 (200 aa).

Residues 133-200 (QLIDMEWKFG…RVRTSMECFC (68 aa)) enclose the COMM domain.

The protein belongs to the COMM domain-containing protein 7 family. As to quaternary structure, component of the commander complex consisting of the CCC subcomplex and the retriever subcomplex. Component of the CCC (COMMD/CCDC22/CCDC93) subcomplex consisting of COMMD1, COMMD2, COMMD3, COMMD4, COMMD5, COMMD6, COMMD7, COMMD8, COMMD9, COMMD10, CCDC22 and CCDC93; within the complex forms a heterodimer with COMMD9. Interacts with RELA. Interacts with CCDC22, CCDC93, SCNN1B, CUL7. Widely expressed with highest expression in lung.

It is found in the cytoplasmic vesicle. Its function is as follows. Scaffold protein in the commander complex that is essential for endosomal recycling of transmembrane cargos; the commander complex is composed of the CCC subcomplex and the retriever subcomplex. May modulate activity of cullin-RING E3 ubiquitin ligase (CRL) complexes. Associates with the NF-kappa-B complex and suppresses its transcriptional activity. In Homo sapiens (Human), this protein is COMM domain-containing protein 7 (COMMD7).